Reading from the N-terminus, the 150-residue chain is D-aminoacyl-tRNA deacylase (150 aa).

The Gly-cisPro motif, important for rejection of L-amino acids signature appears at 138–139; that stretch reads GP.

Belongs to the DTD family. In terms of assembly, homodimer.

The protein localises to the cytoplasm. It carries out the reaction glycyl-tRNA(Ala) + H2O = tRNA(Ala) + glycine + H(+). The enzyme catalyses a D-aminoacyl-tRNA + H2O = a tRNA + a D-alpha-amino acid + H(+). Functionally, an aminoacyl-tRNA editing enzyme that deacylates mischarged D-aminoacyl-tRNAs. Also deacylates mischarged glycyl-tRNA(Ala), protecting cells against glycine mischarging by AlaRS. Acts via tRNA-based rather than protein-based catalysis; rejects L-amino acids rather than detecting D-amino acids in the active site. By recycling D-aminoacyl-tRNA to D-amino acids and free tRNA molecules, this enzyme counteracts the toxicity associated with the formation of D-aminoacyl-tRNA entities in vivo and helps enforce protein L-homochirality. The chain is D-aminoacyl-tRNA deacylase from Akkermansia muciniphila (strain ATCC BAA-835 / DSM 22959 / JCM 33894 / BCRC 81048 / CCUG 64013 / CIP 107961 / Muc).